A 193-amino-acid chain; its full sequence is Imidazoleglycerol-phosphate dehydratase (193 aa).

The protein belongs to the imidazoleglycerol-phosphate dehydratase family.

It localises to the cytoplasm. It carries out the reaction D-erythro-1-(imidazol-4-yl)glycerol 3-phosphate = 3-(imidazol-4-yl)-2-oxopropyl phosphate + H2O. It participates in amino-acid biosynthesis; L-histidine biosynthesis; L-histidine from 5-phospho-alpha-D-ribose 1-diphosphate: step 6/9. This Saccharolobus islandicus (strain M.14.25 / Kamchatka #1) (Sulfolobus islandicus) protein is Imidazoleglycerol-phosphate dehydratase.